The sequence spans 377 residues: Dihydroorotase, mitochondrial (377 aa).

Residues His44, His46, Lys130, His168, and His206 each coordinate Zn(2+). Lys130 is subject to N6-carboxylysine. Residue Ser223 is modified to Phosphoserine. Residue Asp280 coordinates Zn(2+).

The protein belongs to the metallo-dependent hydrolases superfamily. DHOase family. Class II DHOase subfamily. Zn(2+) serves as cofactor.

It localises to the mitochondrion. The enzyme catalyses (S)-dihydroorotate + H2O = N-carbamoyl-L-aspartate + H(+). The protein operates within pyrimidine metabolism; UMP biosynthesis via de novo pathway; (S)-dihydroorotate from bicarbonate: step 3/3. This chain is Dihydroorotase, mitochondrial (PYR4), found in Arabidopsis thaliana (Mouse-ear cress).